Consider the following 234-residue polypeptide: Eosinophil granule major basic protein 2 (234 aa).

The N-terminal stretch at Met1 to Ser15 is a signal peptide. The propeptide at Thr16–Lys115 is acidic. The disordered stretch occupies residues Leu26–Asp96. Ser69 carries an O-linked (Xyl...) (glycosaminoglycan) serine glycan. Over residues Ser71–Pro94 the composition is skewed to acidic residues. The region spanning Ser133–Tyr234 is the C-type lectin domain. Cystine bridges form between Cys135–Cys232 and Cys209–Cys224.

In terms of processing, nitrated.

It localises to the cytoplasmic granule. Functionally, MBP may play some important roles in the allergic reactions and inflammations, since MBP is capable of releasing histamine from mast cells and damaging the epithelial cells of bronchial tubes. Antiparasitic and antibiotic. The protein is Eosinophil granule major basic protein 2 (MBP2) of Cavia porcellus (Guinea pig).